Consider the following 452-residue polypeptide: Scaffold protein ILK (452 aa).

Position 1 is an N-acetylmethionine (Met-1). ANK repeat units follow at residues 2–30 (DDIF…LNQG), 31–63 (DDHG…INVM), 64–96 (NRGD…INAV), 97–129 (NEHG…VSIC), and 130–174 (NKYG…GTTR). Residues 33–139 (HGFSPLHWAC…NKYGEMPVDK (107 aa)) are interaction with LIMS1. At Thr-173 the chain carries Phosphothreonine; by PAK1. Residues 180 to 212 (GTLNKHSGIDFKQLNFLTKLNENHSGELWKGRW) form a PH-like; mediates interaction with TGFB1I1 region. The residue at position 186 (Ser-186) is a Phosphoserine. Residues 193–446 (LNFLTKLNEN…PKFDMIVPIL (254 aa)) enclose the Protein kinase domain. Asn-200, Asn-202, His-203, Ser-204, and Lys-220 together coordinate ATP. Residue Ser-246 is modified to Phosphoserine; by PAK1. Residues His-270, Met-272, and Asn-279 each coordinate ATP. Position 339 (Asp-339) interacts with Mg(2+). Residue Lys-341 participates in ATP binding. The Nuclear localization signal signature appears at 363–371 (KKPEDTNRR). An N6-acetyllysine modification is found at Lys-426.

This sequence belongs to the protein kinase superfamily. TKL Ser/Thr protein kinase family. As to quaternary structure, component of the heterotrimeric IPP (ILK-PINCH-PARVIN) complex composed of ILK, LIMS1/PINCH and PARVA; the complex binds to F-actin via the C-terminal tail of LIMS1 and the N-terminal region of PARVA, promoting F-actin filament bundling. Formation of the IPP complex is dependent on protein kinase C and precedes integrin-mediated cell adhesion and spreading. ILK also interacts with LIMS2/PINCH2 and with PARVB and PARVG which may substitute for LIMS1 and PARVA in the IPP complex; PARVA and PARVB compete for the same binding site. Interaction with PARVG promotes the establishment of cell polarity required for leukocyte migration. Interacts with the cytoplasmic domain of integrin ITGB1 and may also interact with integrins ITGB2, ITGB3 and/or ITGB5. Interacts probably also with TGFB1I1. Interacts (via ANK repeats) with EPHA1 (via SAM domain); stimulated by EFNA1 but independent of the kinase activity of EPHA1. Interacts with FERMT2. Interacts with LIMD2; leading to activate the protein kinase activity. Interacts with PXN/PAXILLIN (via LD motif 4). Interacts with CCDC25 (via cytoplasmic region); initiating the ILK-PARVB cascade to induce cytoskeleton rearrangement and directional migration of cells. Interacts with IQGAP1; the interaction is required for localization of IQGAP1 to the cell cortex. In terms of processing, phosphorylation by PAK1 modulates ILK subcellular location by promoting its nuclear export. As to expression, highly expressed in heart followed by skeletal muscle, pancreas and kidney. Weakly expressed in placenta, lung and liver.

It is found in the cell junction. Its subcellular location is the focal adhesion. The protein resides in the cell membrane. It localises to the cell projection. The protein localises to the lamellipodium. It is found in the cytoplasm. Its subcellular location is the myofibril. The protein resides in the sarcomere. It localises to the nucleus. The protein localises to the cytoskeleton. It is found in the microtubule organizing center. Its subcellular location is the centrosome. The protein resides in the cell cortex. Functionally, scaffold protein which mediates protein-protein interactions during a range of cellular events including focal adhesion assembly, cell adhesion and cell migration. Regulates integrin-mediated signal transduction by contributing to inside-out integrin activation. Recruits PARVA and LIMS1/PITCH to form the heterotrimeric IPP (ILK-PINCH-PARVIN) complex which binds to F-actin via the C-terminal tail of LIMS1 and the N-terminal region of PARVA, promoting F-actin filament bundling, a process required to generate force for actin cytoskeleton reorganization and subsequent dynamic cell adhesion events such as cell spreading and migration. Binding to PARVA promotes effective assembly of ILK into focal adhesions while PARVA-bound ILK can simultaneously engage integrin-beta cytoplasmic tails to mediate cell adhesion. Plays a role with PARVG in promoting the cell adhesion and spreading of leukocytes. Acts as an upstream effector of both AKT1/PKB and GSK3. Mediates trafficking of caveolae to the cell surface in an ITGB1-dependent manner by promoting the recruitment of IQGAP1 to the cell cortex which cooperates with its effector DIAPH1 to locally stabilize microtubules and allow stable insertion of caveolae into the plasma membrane. Required for the maintenance of mitotic spindle integrity by promoting phosphorylation of TACC3 by AURKA. Associates with chromatin and may act as a negative regulator of transcription when located in the nucleus. This is Scaffold protein ILK from Homo sapiens (Human).